The primary structure comprises 175 residues: Large ribosomal subunit protein uL10 (175 aa).

This sequence belongs to the universal ribosomal protein uL10 family. In terms of assembly, part of the ribosomal stalk of the 50S ribosomal subunit. The N-terminus interacts with L11 and the large rRNA to form the base of the stalk. The C-terminus forms an elongated spine to which L12 dimers bind in a sequential fashion forming a multimeric L10(L12)X complex.

Its function is as follows. Forms part of the ribosomal stalk, playing a central role in the interaction of the ribosome with GTP-bound translation factors. In Mycobacterium sp. (strain KMS), this protein is Large ribosomal subunit protein uL10.